The primary structure comprises 255 residues: PABIR family member 2 (255 aa).

Residues Met-1–Asn-24 form a disordered region. N-acetylalanine is present on Ala-2. Residues Ser-25, Ser-33, Ser-50, and Ser-58 each carry the phosphoserine modification. A Phosphothreonine modification is found at Thr-112. Ser-115 and Ser-119 each carry phosphoserine. Arg-122 bears the Omega-N-methylarginine mark. The residue at position 145 (Ser-145) is a Phosphoserine. Disordered regions lie at residues Leu-169 to Ser-196 and Ser-219 to Ala-238. The span at Arg-174 to Pro-184 shows a compositional bias: basic and acidic residues.

It belongs to the FAM122 family.

In Mus musculus (Mouse), this protein is PABIR family member 2.